Here is a 2250-residue protein sequence, read N- to C-terminus: DNA polymerase epsilon catalytic subunit A (2250 aa).

3 disordered regions span residues M1 to A63, N235 to P259, and P1990 to S2010. Residues G32–A41 show a composition bias toward gly residues. Basic and acidic residues predominate over residues D249–P259. A compositionally biased stretch (polar residues) spans P1990–P2000. Residues C2118, C2121, C2156, and C2159 each coordinate Zn(2+). A CysA-type zinc finger spans residues C2118–C2159. 4 residues coordinate [4Fe-4S] cluster: C2190, C2193, C2205, and C2207. The CysB motif motif lies at C2190–C2207.

The protein belongs to the DNA polymerase type-B family. In terms of assembly, heterotetramer. Consists of 4 subunits: POL2, DPB2, DPB3 and DPB4. The cofactor is [4Fe-4S] cluster.

Its subcellular location is the nucleus. The enzyme catalyses DNA(n) + a 2'-deoxyribonucleoside 5'-triphosphate = DNA(n+1) + diphosphate. In terms of biological role, DNA polymerase II participates in chromosomal DNA replication. This is DNA polymerase epsilon catalytic subunit A (POL2) from Cryptococcus neoformans var. neoformans serotype D (strain JEC21 / ATCC MYA-565) (Filobasidiella neoformans).